Here is a 545-residue protein sequence, read N- to C-terminus: E3 ubiquitin-protein ligase ipaH9.8 (545 aa).

The interval 1 to 242 is interaction with target proteins; sequence MLPINNNFSL…YHGPRIYFSM (242 aa). 8 LRR repeats span residues 57–77, 78–99, 100–117, 118–139, 140–157, 158–179, 182–203, and 205–228; these read NSDE…NLPA, QITL…PVTL, KKLY…VLPP, ALES…PDSL, LTMN…SLPQ, ALKN…SEGN, VVRE…ILNL, and NECS…QRLT. The linker stretch occupies residues 243–250; it reads SDGQQNTL. The segment at 251–545 is E3 ubiquitin-protein ligase catalytic domain; that stretch reads HRPLADAVTA…SENGSQLHHS (295 aa). In terms of domain architecture, NEL spans 253 to 545; it reads PLADAVTAWF…SENGSQLHHS (293 aa). The active-site Glycyl thioester intermediate is the C337.

The protein belongs to the LRR-containing bacterial E3 ligase family. Also interacts with human and mouse U2AF1 (U2AF35). In terms of processing, ubiquitinated in the presence of host E1 ubiquitin-activating enzyme, E2 ubiquitin-conjugating enzyme and ubiquitin.

It localises to the secreted. Its subcellular location is the host cytoplasm. The protein resides in the host nucleus. It carries out the reaction S-ubiquitinyl-[E2 ubiquitin-conjugating enzyme]-L-cysteine + [acceptor protein]-L-lysine = [E2 ubiquitin-conjugating enzyme]-L-cysteine + N(6)-ubiquitinyl-[acceptor protein]-L-lysine.. Its activity is regulated as follows. Exists in an autoinhibited state in the absence of substrate protein, due to interactions of the leucine-rich repeats with NEL domain. Is activated upon binding to a substrate protein. Functionally, effector E3 ubiquitin ligase that interferes with host's ubiquitination pathway and modulates the acute inflammatory responses, thus facilitating bacterial colonization within the host cell. Interacts with IKBKG (NEMO) and TNIP1 (ABIN-1), a ubiquitin-binding adapter protein, which results in TNIP1-dependent 'Lys-27'-linked polyubiquitination of IKBKG. Consequently, polyubiquitinated IKBKG undergoes proteasome-dependent degradation, which perturbs NF-kappa-B activation during bacterial infection. Mediates polyubiquitination of host U2AF1, leading to its proteasomal degradation. Catalyzes 'Lys-48'-linked polyubiquitination and subsequent degradation of a subset of host guanylate-binding proteins (GBP1, GBP2, GBP4 and GBP6), thereby suppressing host cell defense. In contrast, host GBP3 and GBP7 are not ubiquitinated by IpaH9.8. Uses UBE2D2 (UBCH5B) as an E2 ubiquitin-conjugating enzyme. This is E3 ubiquitin-protein ligase ipaH9.8 (ipaH9.8) from Shigella boydii serotype 18 (strain CDC 3083-94 / BS512).